A 335-amino-acid polypeptide reads, in one-letter code: Mesoderm-specific transcript protein (335 aa).

A run of 2 helical transmembrane segments spans residues 13 to 33 (WWVQVGLLAVPLLAAYLHIPP) and 63 to 83 (VGVVGSPEIVVLLHGFPTSSY). One can recognise an AB hydrolase-1 domain in the interval 71–310 (IVVLLHGFPT…PRSTVSILDD (240 aa)). The RVIALD motif lies at 98 to 103 (RVIALD). N-linked (GlcNAc...) asparagine glycosylation occurs at Asn163. The helical transmembrane segment at 266-286 (VGALASVSIPIHFIYGPLDPI) threads the bilayer.

This sequence belongs to the AB hydrolase superfamily. Expressed in mesodermal tissues. Isoform 1 is exclusively expressed from the paternal allele in all fetal tissues and cell lines examined, whereas isoform 2 is preferentially expressed from the paternal allele in a tissue-type-specific manner.

It is found in the endoplasmic reticulum membrane. This Mus musculus (Mouse) protein is Mesoderm-specific transcript protein (Mest).